A 603-amino-acid chain; its full sequence is Phosphoenolpyruvate carboxykinase [GTP] (603 aa).

Substrate is bound by residues Arg-87 and 209 to 211 (YAG). Residues Lys-218 and His-237 each coordinate Mn(2+). Ser-258 lines the substrate pocket. 259 to 264 (GSGKTS) is a GTP binding site. Ser-260 is an active-site residue. Residue Asp-275 participates in Mn(2+) binding. Residue 365–367 (NAR) coordinates substrate. GTP contacts are provided by Arg-367 and Arg-398.

It belongs to the phosphoenolpyruvate carboxykinase [GTP] family. Mn(2+) is required as a cofactor.

The protein resides in the cytoplasm. The catalysed reaction is oxaloacetate + GTP = phosphoenolpyruvate + GDP + CO2. It functions in the pathway carbohydrate biosynthesis; gluconeogenesis. Functionally, catalyzes the conversion of oxaloacetate (OAA) to phosphoenolpyruvate (PEP), the rate-limiting step in the metabolic pathway that produces glucose from lactate and other precursors derived from the citric acid cycle. This chain is Phosphoenolpyruvate carboxykinase [GTP], found in Saccharolobus solfataricus (strain ATCC 35092 / DSM 1617 / JCM 11322 / P2) (Sulfolobus solfataricus).